We begin with the raw amino-acid sequence, 242 residues long: Probable transcriptional regulatory protein BTH_I1015 (242 aa).

The protein belongs to the TACO1 family.

It localises to the cytoplasm. This chain is Probable transcriptional regulatory protein BTH_I1015, found in Burkholderia thailandensis (strain ATCC 700388 / DSM 13276 / CCUG 48851 / CIP 106301 / E264).